Reading from the N-terminus, the 711-residue chain is Interferon-induced GTP-binding protein Mx2 (711 aa).

Disordered stretches follow at residues 1 to 26 and 62 to 88; these read MPKPRMSWPYQRHRQASSPPHPHKEM and MLTLSPQQPGGKSGQQTSKGPENNLYS. Low complexity predominate over residues 66–82; that stretch reads SPQQPGGKSGQQTSKGP. The Dynamin-type G domain occupies 112–383; it reads DLALPTIAVI…LIGHISKSLP (272 aa). Residues 122-129 form a G1 motif region; it reads GDQSSGKS. GTP is bound at residue 122–129; sequence GDQSSGKS. Residues 147-149 are G2 motif; that stretch reads ITR. The tract at residues 221–224 is G3 motif; sequence DLPG. Residues 221–225 and 290–293 contribute to the GTP site; these read DLPGI and TKPD. The G4 motif stretch occupies residues 290-293; the sequence is TKPD. The G5 motif stretch occupies residues 322-325; that stretch reads KCRG. The 92-residue stretch at 619–710 folds into the GED domain; the sequence is ITEIGVHVNA…TLSKFAQSLQ (92 aa).

Belongs to the TRAFAC class dynamin-like GTPase superfamily. Dynamin/Fzo/YdjA family. Ubiquitous.

Its subcellular location is the cytoplasm. It localises to the nucleus. Interferon-induced dynamin-like GTPase with antiviral activity against influenza virus A (FLUAV). This is Interferon-induced GTP-binding protein Mx2 (MX2) from Sus scrofa (Pig).